A 137-amino-acid polypeptide reads, in one-letter code: Actin-depolymerizing factor 7 (137 aa).

Ser-6 is subject to Phosphoserine. One can recognise an ADF-H domain in the interval 7 to 137 (GMAVEDECKL…SFDIIKSRAL (131 aa)).

This sequence belongs to the actin-binding proteins ADF family. Specifically expressed in pollen.

It localises to the cytoplasm. The protein resides in the cytoskeleton. Actin-depolymerizing protein. Severs actin filaments (F-actin) and binds to actin monomers. Binds monomeric actin (G-actin) with a marked preference for the ADP-loaded form and inhibits the rate of nucleotide exchange on G-actin. Required for pollen tube growth. Promotes turnover of longitudinal actin cables by severing actin filaments in pollen tubes. The sequence is that of Actin-depolymerizing factor 7 (ADF7) from Arabidopsis thaliana (Mouse-ear cress).